The chain runs to 422 residues: GTPase Obg (422 aa).

The 158-residue stretch at 1–158 (MFYDRARIFV…RWLDLELKLL (158 aa)) folds into the Obg domain. The OBG-type G domain occupies 159–329 (ADVGLVGFPN…LVYRVSALLE (171 aa)). GTP is bound by residues 165–172 (GFPNAGKS), 190–194 (FTTIT), 212–215 (DIPG), 282–285 (NKMD), and 310–312 (SAV). Mg(2+) is bound by residues Ser-172 and Thr-192. Positions 337–422 (VPEALERPVI…IGDYEFEYVE (86 aa)) constitute an OCT domain.

Belongs to the TRAFAC class OBG-HflX-like GTPase superfamily. OBG GTPase family. As to quaternary structure, monomer. Requires Mg(2+) as cofactor.

Its subcellular location is the cytoplasm. An essential GTPase which binds GTP, GDP and possibly (p)ppGpp with moderate affinity, with high nucleotide exchange rates and a fairly low GTP hydrolysis rate. Plays a role in control of the cell cycle, stress response, ribosome biogenesis and in those bacteria that undergo differentiation, in morphogenesis control. This Pelotomaculum thermopropionicum (strain DSM 13744 / JCM 10971 / SI) protein is GTPase Obg.